A 436-amino-acid chain; its full sequence is UDP-N-acetylmuramate--L-alanine ligase (436 aa).

ATP is bound at residue Gly108 to Ser114.

It belongs to the MurCDEF family.

The protein resides in the cytoplasm. The enzyme catalyses UDP-N-acetyl-alpha-D-muramate + L-alanine + ATP = UDP-N-acetyl-alpha-D-muramoyl-L-alanine + ADP + phosphate + H(+). It functions in the pathway cell wall biogenesis; peptidoglycan biosynthesis. In terms of biological role, cell wall formation. The chain is UDP-N-acetylmuramate--L-alanine ligase from Bacillus cereus (strain G9842).